A 93-amino-acid chain; its full sequence is Small ribosomal subunit protein uS19 (93 aa).

The protein belongs to the universal ribosomal protein uS19 family.

Functionally, protein S19 forms a complex with S13 that binds strongly to the 16S ribosomal RNA. The polypeptide is Small ribosomal subunit protein uS19 (Clostridioides difficile (strain 630) (Peptoclostridium difficile)).